A 368-amino-acid chain; its full sequence is Phosphate acyltransferase (368 aa).

This sequence belongs to the PlsX family. As to quaternary structure, homodimer. Probably interacts with PlsY.

Its subcellular location is the cytoplasm. The catalysed reaction is a fatty acyl-[ACP] + phosphate = an acyl phosphate + holo-[ACP]. The protein operates within lipid metabolism; phospholipid metabolism. Catalyzes the reversible formation of acyl-phosphate (acyl-PO(4)) from acyl-[acyl-carrier-protein] (acyl-ACP). This enzyme utilizes acyl-ACP as fatty acyl donor, but not acyl-CoA. In Cereibacter sphaeroides (strain ATCC 17025 / ATH 2.4.3) (Rhodobacter sphaeroides), this protein is Phosphate acyltransferase.